Here is a 799-residue protein sequence, read N- to C-terminus: MDPGVEKKKQQMELVDVESGGLPVERQDSLFREAVRAEHAGAAHWDEQDSWGRTMSLAFQCVGILYGDIGTSSLYVYSSTFEHGIGHPDDVVGVLSLIVYSFMLFTVIKIVFVALHANDHGDGGTFALYSLISRHAKVSLIPNHQAEDELISGYSSSGKPSATLRRAHWLKQLLEASKAAKISLFLLTILAIAMVISDAVLTPPISVLSAVGGLREKVPHLTTDQIVWITVAILVVLFAIQRYGTDKVGYSFAPIILLWLLLIGATGLYNLIKHDISVLRAFNPKYIIDYFRRNKKEGWVSLGSILLCFTGSEALFANLGYFSIRSIQLSFSFALLPSVLLTYIGQAAFLSKNPKNVANTFFAATPISLFWPTFIMAIAASIIGSQAMISCAFATVSHLQSLSCFPRVKILHTSKRFPGQLYIPGVNFLLCVAACVVTVSFKTTVIIGKAHEICVILVMIITTLLMTIVMLLVWKINILWVALFFITFTSTEAVYLSSVLYKFTHGPYVPVAMSVVLMVVMIVWHYVHVKRYKYELEHTVSTDKVKEMLESHDLKRVRGVALFYTELVQGIPPIFPHLIEKIPTIHSVLVFISIKHLPVPHVDTSERFLFRQVELKDYKVFRCVARYGYRDSLEEAKDFVVTLLENLQDYIRDVNLYTDEPHTISAHSSCNHSFSREKPSGRYAVHAEDMLTPIESFSEITALSNYGSDRLPHFKASKMNMEELAKIEQEQMFIEKEMEKGVVYILGETEVVVRPHSSLLKKIVVNYVYSFLRKNFVQGQKMLFIPHRQLLKVGISYEI.

The Cytoplasmic portion of the chain corresponds to 1 to 56; it reads MDPGVEKKKQQMELVDVESGGLPVERQDSLFREAVRAEHAGAAHWDEQDSWGRTMS. Residues 57 to 77 form a helical membrane-spanning segment; that stretch reads LAFQCVGILYGDIGTSSLYVY. Over 78-93 the chain is Extracellular; that stretch reads SSTFEHGIGHPDDVVG. Residues 94–114 form a helical membrane-spanning segment; sequence VLSLIVYSFMLFTVIKIVFVA. Residues 115-181 are Cytoplasmic-facing; sequence LHANDHGDGG…QLLEASKAAK (67 aa). Residues 182–202 form a helical membrane-spanning segment; sequence ISLFLLTILAIAMVISDAVLT. The Extracellular portion of the chain corresponds to 203-219; the sequence is PPISVLSAVGGLREKVP. The helical transmembrane segment at 220–240 threads the bilayer; that stretch reads HLTTDQIVWITVAILVVLFAI. Over 241–251 the chain is Cytoplasmic; the sequence is QRYGTDKVGYS. The chain crosses the membrane as a helical span at residues 252–272; sequence FAPIILLWLLLIGATGLYNLI. Over 273–301 the chain is Extracellular; the sequence is KHDISVLRAFNPKYIIDYFRRNKKEGWVS. A helical membrane pass occupies residues 302 to 322; sequence LGSILLCFTGSEALFANLGYF. The Cytoplasmic segment spans residues 323–328; sequence SIRSIQ. The helical transmembrane segment at 329-349 threads the bilayer; the sequence is LSFSFALLPSVLLTYIGQAAF. The Extracellular segment spans residues 350–362; the sequence is LSKNPKNVANTFF. A helical transmembrane segment spans residues 363 to 383; it reads AATPISLFWPTFIMAIAASII. Residues 384–420 lie on the Cytoplasmic side of the membrane; that stretch reads GSQAMISCAFATVSHLQSLSCFPRVKILHTSKRFPGQ. Residues 421 to 441 traverse the membrane as a helical segment; it reads LYIPGVNFLLCVAACVVTVSF. The Extracellular segment spans residues 442–452; it reads KTTVIIGKAHE. Residues 453-473 form a helical membrane-spanning segment; the sequence is ICVILVMIITTLLMTIVMLLV. Over 474–475 the chain is Cytoplasmic; the sequence is WK. A helical transmembrane segment spans residues 476–496; that stretch reads INILWVALFFITFTSTEAVYL. Residues 497–508 are Extracellular-facing; it reads SSVLYKFTHGPY. The chain crosses the membrane as a helical span at residues 509–529; the sequence is VPVAMSVVLMVVMIVWHYVHV. The Cytoplasmic segment spans residues 530-799; it reads KRYKYELEHT…LLKVGISYEI (270 aa).

Belongs to the HAK/KUP transporter (TC 2.A.72.3) family.

The protein localises to the membrane. Its function is as follows. High-affinity potassium transporter. This is Potassium transporter 21 (HAK21) from Oryza sativa subsp. japonica (Rice).